The sequence spans 237 residues: Phosphoribosylaminoimidazole-succinocarboxamide synthase (237 aa).

The protein belongs to the SAICAR synthetase family.

The enzyme catalyses 5-amino-1-(5-phospho-D-ribosyl)imidazole-4-carboxylate + L-aspartate + ATP = (2S)-2-[5-amino-1-(5-phospho-beta-D-ribosyl)imidazole-4-carboxamido]succinate + ADP + phosphate + 2 H(+). It participates in purine metabolism; IMP biosynthesis via de novo pathway; 5-amino-1-(5-phospho-D-ribosyl)imidazole-4-carboxamide from 5-amino-1-(5-phospho-D-ribosyl)imidazole-4-carboxylate: step 1/2. This is Phosphoribosylaminoimidazole-succinocarboxamide synthase from Methanosarcina mazei (strain ATCC BAA-159 / DSM 3647 / Goe1 / Go1 / JCM 11833 / OCM 88) (Methanosarcina frisia).